Reading from the N-terminus, the 451-residue chain is MNAHPKEIWEQCLNIIKGETTEVSFNTWIKSITPISIENDTFMLTVPNDLTKGILSNKYTDLIIRSLQMVTSQKYNVKFLISSELPEEFLTLDTINEQNIKGSIIVSDEMSAMLNPKYTFTSFVIGNSNRFAHAASLAVAESPAKAYNPLFIYGGVGLGKTHLMHAIGHHILHNNTSCKVVYVSSEKFTNELINSIKDDKNVEFRSKYRNIDVLLIDDIQFIAGKERTQEEFFHTFNALYEANKQIILSSDRPPKEIPTLEDRLRSRFEWGLIADIQPPDFETRMAILKKKADVEKLNIPNEVMAYIATKIKSNIRELEGALIRIVAFSSLTNKEISVDLAIEALKDIISSGQSKQVTIELIQDVVSNYYNLKVSDFKSSRRTRNVAFPRQIAMYLCRKLTDMSLPKIGEEFGGRDHTTVIHAYEKISNNLKKDESLKNAVNDLTKRLDQQ.

Positions 1–73 (MNAHPKEIWE…IRSLQMVTSQ (73 aa)) are domain I, interacts with DnaA modulators. The segment at 73-112 (QKYNVKFLISSELPEEFLTLDTINEQNIKGSIIVSDEMSA) is domain II. Positions 113–329 (MLNPKYTFTS…GALIRIVAFS (217 aa)) are domain III, AAA+ region. ATP-binding residues include G157, G159, K160, and T161. Positions 330-451 (SLTNKEISVD…NDLTKRLDQQ (122 aa)) are domain IV, binds dsDNA.

It belongs to the DnaA family. In terms of assembly, oligomerizes as a right-handed, spiral filament on DNA at oriC.

It is found in the cytoplasm. Its function is as follows. Plays an essential role in the initiation and regulation of chromosomal replication. ATP-DnaA binds to the origin of replication (oriC) to initiate formation of the DNA replication initiation complex once per cell cycle. Binds the DnaA box (a 9 base pair repeat at the origin) and separates the double-stranded (ds)DNA. Forms a right-handed helical filament on oriC DNA; dsDNA binds to the exterior of the filament while single-stranded (ss)DNA is stabiized in the filament's interior. The ATP-DnaA-oriC complex binds and stabilizes one strand of the AT-rich DNA unwinding element (DUE), permitting loading of DNA polymerase. After initiation quickly degrades to an ADP-DnaA complex that is not apt for DNA replication. Binds acidic phospholipids. The sequence is that of Chromosomal replication initiator protein DnaA from Clostridium kluyveri (strain NBRC 12016).